The sequence spans 314 residues: tRNA pseudouridine synthase B (314 aa).

His43 contacts substrate. The Nucleophile role is filled by Asp48. Substrate is bound by residues Tyr76, Tyr179, and Leu200.

It belongs to the pseudouridine synthase TruB family. Type 1 subfamily.

The catalysed reaction is uridine(55) in tRNA = pseudouridine(55) in tRNA. Responsible for synthesis of pseudouridine from uracil-55 in the psi GC loop of transfer RNAs. The polypeptide is tRNA pseudouridine synthase B (Shigella boydii serotype 4 (strain Sb227)).